The following is a 457-amino-acid chain: MDHLPIFCQLRDRDCLIVGGGDVAERKARLLLEAGARLTVNALNFIPQFTVWANEGMLTLVEGPFDETLLDSCWLAIAATDDDTVNQRVSDAAESRRIFCNVVDAPKAASFIMPSIIDRSPLMVAVSSGGTSPVLARLLREKLESLLPQHLGQVARYAGQLRARVKKQFATMGERRRFWEKFFVNDRLAQSLANADEKAVNATTERLFSEPLDHRGEVVLVGAGPGDAGLLTLKGLQQIQQADIVVYDRLVSDDIMNLVRRDADRVFVGKRAGYHCVPQEEINQILLREAQKGKRVVRLKGGDPFIFGRGGEELETLCHAGIPFSVVPGITAASGCSAYSGIPLTHRDYAQSVRLVTGHLKTGGELDWENLAAEKQTLVFYMGLNQAATIQEKLIAFGMQADMPVALVENGTSVKQRVVHGVLTQLGELAQQVESPALIIVGRVVALRDKLNWFSNH.

The segment at methionine 1 to threonine 204 is precorrin-2 dehydrogenase /sirohydrochlorin ferrochelatase. Residues aspartate 22–valine 23 and leucine 43–asparagine 44 each bind NAD(+). Position 128 is a phosphoserine (serine 128). Positions glycine 216–histidine 457 are uroporphyrinogen-III C-methyltransferase. An S-adenosyl-L-methionine-binding site is contributed by proline 225. The Proton acceptor role is filled by aspartate 248. Lysine 270 serves as the catalytic Proton donor. S-adenosyl-L-methionine contacts are provided by residues glycine 301 to aspartate 303, isoleucine 306, threonine 331 to alanine 332, methionine 382, and glycine 411.

In the N-terminal section; belongs to the precorrin-2 dehydrogenase / sirohydrochlorin ferrochelatase family. It in the C-terminal section; belongs to the precorrin methyltransferase family.

It catalyses the reaction uroporphyrinogen III + 2 S-adenosyl-L-methionine = precorrin-2 + 2 S-adenosyl-L-homocysteine + H(+). It carries out the reaction precorrin-2 + NAD(+) = sirohydrochlorin + NADH + 2 H(+). The enzyme catalyses siroheme + 2 H(+) = sirohydrochlorin + Fe(2+). It participates in cofactor biosynthesis; adenosylcobalamin biosynthesis; precorrin-2 from uroporphyrinogen III: step 1/1. It functions in the pathway cofactor biosynthesis; adenosylcobalamin biosynthesis; sirohydrochlorin from precorrin-2: step 1/1. Its pathway is porphyrin-containing compound metabolism; siroheme biosynthesis; precorrin-2 from uroporphyrinogen III: step 1/1. The protein operates within porphyrin-containing compound metabolism; siroheme biosynthesis; siroheme from sirohydrochlorin: step 1/1. It participates in porphyrin-containing compound metabolism; siroheme biosynthesis; sirohydrochlorin from precorrin-2: step 1/1. Its function is as follows. Multifunctional enzyme that catalyzes the SAM-dependent methylations of uroporphyrinogen III at position C-2 and C-7 to form precorrin-2 via precorrin-1. Then it catalyzes the NAD-dependent ring dehydrogenation of precorrin-2 to yield sirohydrochlorin. Finally, it catalyzes the ferrochelation of sirohydrochlorin to yield siroheme. The chain is Siroheme synthase from Salmonella paratyphi A (strain ATCC 9150 / SARB42).